Reading from the N-terminus, the 377-residue chain is UPF0754 membrane protein LMOf2365_2257 (377 aa).

2 helical membrane-spanning segments follow: residues 1-21 and 357-377; these read MSVL…GAMT and YLGG…AMWI.

The protein belongs to the UPF0754 family.

The protein localises to the cell membrane. The sequence is that of UPF0754 membrane protein LMOf2365_2257 from Listeria monocytogenes serotype 4b (strain F2365).